Consider the following 388-residue polypeptide: uncharacterized protein (388 aa).

8 helical membrane-spanning segments follow: residues 15 to 37 (VISA…LLVL), 97 to 119 (GFSK…VVFY), 129 to 151 (PIWG…TFLL), 158 to 175 (FIYI…FLSA), 179 to 196 (MMLA…VLFK), 203 to 225 (LAFW…YLSQ), 304 to 326 (IFIV…YIYF), and 347 to 369 (LLSV…DALL).

It is found in the cell membrane. This is an uncharacterized protein from Aquifex aeolicus (strain VF5).